The following is a 300-amino-acid chain: ESX-5 secretion-associated protein EspG5 (300 aa).

It belongs to the EspG family. In terms of assembly, interacts specifically with ESX-5-dependent PE/PPE proteins. Binds PPE33 and PPE18. Does not interact with EsxN. Monomer in solution.

It localises to the cytoplasm. Its function is as follows. Specific chaperone for cognate PE/PPE proteins. Plays an important role in preventing aggregation of PE/PPE dimers. Required for LipY and PE31/PPE18 secretion. The chain is ESX-5 secretion-associated protein EspG5 from Mycobacterium marinum (strain ATCC BAA-535 / M).